A 657-amino-acid polypeptide reads, in one-letter code: MRLKIGFILRSLLVVGSFLGLVVLWSSLSSRPDDPSPLSRMREDRDVNNPLPNRGGNGLAPGDDRFKPVVPWPHVEGVEVDLESIRRKNKAKNEQERHAGGDSQKDIMQRQYLTFKPQTFTYRDPVLRPGVLGNFEPKEPEPHGVVGGPGENAKPLVLGPEYKQAAQASIKEFGFNMAASDMISLDRSVNDLRQEECKYWHYDENLLTSSVVIVFHNEGWSTLMRTVHSVIKRTPRKYLAEIVLIDDFSNKEHLKEKLTEYIKLWNGLVKVFRNERREGLIQARSIGAQKAKLGQVLIYLDAHCEVAVNWYAPLVAPISKDRTICTVPIIDVINGNTYEIIPQGGGDEDGYARGAWDWSMLWKRVPLTPREKRLRKTKTEPYRSPAMAGGLFAIERDFFFELGLYDPGLQIWGGENFEISYKIWQCGGKLLFVPCSRVGHIYRLEGWQGNPPPLYVGSSPTLKNYVRVVEVWWDEYKDYFYASRPESKALPYGDISELKKFREDHNCKSFKWFMEEIAYDITAHYPLPPRNVEWGEIRGLETAYCIDSMGKTNGGFVELGPCHRMGGNQLFRINEANQLMQYDQCLTKGPDGSKVMITHCNLNEFKEWQYFKNLHRFTHIASGKCLDRSEVLHQVFISSCDNGKMTQKWEMNNIHSV.

Residues 1–6 (MRLKIG) lie on the Cytoplasmic side of the membrane. The helical; Signal-anchor for type II membrane protein transmembrane segment at 7–29 (FILRSLLVVGSFLGLVVLWSSLS) threads the bilayer. The segment at 30 to 66 (SRPDDPSPLSRMREDRDVNNPLPNRGGNGLAPGDDRF) is disordered. The Lumenal portion of the chain corresponds to 30–657 (SRPDDPSPLS…KWEMNNIHSV (628 aa)). Disulfide bonds link Cys-197-Cys-435, Cys-426-Cys-507, Cys-545-Cys-562, Cys-585-Cys-600, and Cys-625-Cys-640. Residues 206 to 317 (LLTSSVVIVF…VNWYAPLVAP (112 aa)) are catalytic subdomain A. Substrate contacts are provided by Asp-247 and Arg-277. 2 residues coordinate Mn(2+): Asp-301 and His-303. Residues 381 to 443 (PYRSPAMAGG…PCSRVGHIYR (63 aa)) form a catalytic subdomain B region. Trp-412 is a binding site for substrate. His-440 serves as a coordination point for Mn(2+). Arg-443 is a substrate binding site. The 121-residue stretch at 532–652 (VEWGEIRGLE…GKMTQKWEMN (121 aa)) folds into the Ricin B-type lectin domain.

The protein belongs to the glycosyltransferase 2 family. GalNAc-T subfamily. Requires Mn(2+) as cofactor. In terms of tissue distribution, highly expressed in sublingual gland. Expressed at lower level in stomach, small intestiine and colon.

It localises to the golgi apparatus membrane. The enzyme catalyses L-seryl-[protein] + UDP-N-acetyl-alpha-D-galactosamine = a 3-O-[N-acetyl-alpha-D-galactosaminyl]-L-seryl-[protein] + UDP + H(+). It catalyses the reaction L-threonyl-[protein] + UDP-N-acetyl-alpha-D-galactosamine = a 3-O-[N-acetyl-alpha-D-galactosaminyl]-L-threonyl-[protein] + UDP + H(+). Its pathway is protein modification; protein glycosylation. Its function is as follows. Glycopeptide transferase involved in O-linked oligosaccharide biosynthesis, which catalyzes the transfer of an N-acetyl-D-galactosamine residue to an already glycosylated peptide. In contrast to other proteins of the family, it does not act as a peptide transferase that transfers GalNAc onto serine or threonine residue on the protein receptor, but instead requires the prior addition of a GalNAc on a peptide before adding additional GalNAc moieties. Some peptide transferase activity is however not excluded, considering that its appropriate peptide substrate may remain unidentified. The polypeptide is N-acetylgalactosaminyltransferase 7 (Galnt7) (Rattus norvegicus (Rat)).